The primary structure comprises 115 residues: UPF0125 protein VP0646 (115 aa).

The interval 92–115 is disordered; sequence RAEQAKAAGNADPVTGGKPNALRK.

It belongs to the UPF0125 (RnfH) family.

The protein is UPF0125 protein VP0646 of Vibrio parahaemolyticus serotype O3:K6 (strain RIMD 2210633).